An 89-amino-acid polypeptide reads, in one-letter code: Large ribosomal subunit protein bL27 (89 aa).

Residues 1-21 (MAHKKAGGSSRNGRDSQSKRL) form a disordered region.

Belongs to the bacterial ribosomal protein bL27 family.

The polypeptide is Large ribosomal subunit protein bL27 (Rhizobium leguminosarum bv. trifolii (strain WSM2304)).